Here is a 354-residue protein sequence, read N- to C-terminus: Protein RecA (354 aa).

An ATP-binding site is contributed by 75–82 (GPESSGKT).

The protein belongs to the RecA family.

The protein localises to the cytoplasm. Functionally, can catalyze the hydrolysis of ATP in the presence of single-stranded DNA, the ATP-dependent uptake of single-stranded DNA by duplex DNA, and the ATP-dependent hybridization of homologous single-stranded DNAs. It interacts with LexA causing its activation and leading to its autocatalytic cleavage. This Cupriavidus taiwanensis (strain DSM 17343 / BCRC 17206 / CCUG 44338 / CIP 107171 / LMG 19424 / R1) (Ralstonia taiwanensis (strain LMG 19424)) protein is Protein RecA.